Here is a 244-residue protein sequence, read N- to C-terminus: Transcriptional activator protein CarR (244 aa).

In terms of domain architecture, HTH luxR-type spans 162–227 (DNSRNALLSP…HAITKALELN (66 aa)). A DNA-binding region (H-T-H motif) is located at residues 186-205 (YKEVSRILGISEVTVKFHIN).

This sequence belongs to the autoinducer-regulated transcriptional regulatory protein family.

Its function is as follows. Functions as an OHLL responsive transcriptional regulator which acts in the control of the biosynthesis of carbapenem antibiotics. This chain is Transcriptional activator protein CarR (carR), found in Pectobacterium carotovorum subsp. carotovorum (Erwinia carotovora subsp. carotovora).